We begin with the raw amino-acid sequence, 948 residues long: Probable DNA-directed RNA polymerase (948 aa).

Active-site residues include D600, K680, and D853.

This sequence belongs to the phage and mitochondrial RNA polymerase family.

The protein localises to the mitochondrion. It carries out the reaction RNA(n) + a ribonucleoside 5'-triphosphate = RNA(n+1) + diphosphate. Functionally, DNA-dependent RNA polymerase catalyzes the transcription of DNA into RNA using the four ribonucleoside triphosphates as substrates. This chain is Probable DNA-directed RNA polymerase, found in Podospora anserina (Pleurage anserina).